Consider the following 356-residue polypeptide: Sensor protein BasS (356 aa).

Residues 1 to 13 (MRFQRRAMTLRQR) are Cytoplasmic-facing. The chain crosses the membrane as a helical span at residues 14–34 (LMLTIGLILLVFQLISTFWLW). At 35 to 64 (HESTEQIQLFEQALRDNRNNDRHIMHEIRE) the chain is on the periplasmic side. A helical membrane pass occupies residues 65–88 (AVASLIVPGVFMVSLTLLICYQAV). An HAMP domain is found at 89–141 (RRITRPLAELQKELEARTADNLAPIAIHSSTLEIESVVSAINQLVTRLTTTLD). Over 89-356 (RRITRPLAEL…TRAWVLLKKA (268 aa)) the chain is Cytoplasmic. Residues 149–356 (DVAHELRTPL…TRAWVLLKKA (208 aa)) form the Histidine kinase domain. His152 is modified (phosphohistidine; by autocatalysis).

In terms of processing, autophosphorylated.

The protein resides in the cell inner membrane. The enzyme catalyses ATP + protein L-histidine = ADP + protein N-phospho-L-histidine.. Its function is as follows. Member of the two-component regulatory system BasS/BasR. Autophosphorylates and activates BasR by phosphorylation. Plays a role in the adaptation of the organism to the host environment, in particular to neutrophils, and therefore it plays a role in virulence as well. In Salmonella typhimurium (strain LT2 / SGSC1412 / ATCC 700720), this protein is Sensor protein BasS (basS).